A 59-amino-acid polypeptide reads, in one-letter code: Large ribosomal subunit protein uL30 (59 aa).

This sequence belongs to the universal ribosomal protein uL30 family. In terms of assembly, part of the 50S ribosomal subunit.

This Psychrobacter cryohalolentis (strain ATCC BAA-1226 / DSM 17306 / VKM B-2378 / K5) protein is Large ribosomal subunit protein uL30.